The following is a 278-amino-acid chain: Putative phosphatase MG265 (278 aa).

Asp-9 functions as the Nucleophile in the catalytic mechanism. Position 9 (Asp-9) interacts with Mg(2+). Leu-10 is a phosphate binding site. Asp-11 provides a ligand contact to Mg(2+). Residues 43 to 44 (SG) and Lys-204 each bind phosphate. Residue Asp-227 participates in Mg(2+) binding. Residue Asn-230 participates in phosphate binding.

The protein belongs to the HAD-like hydrolase superfamily. Cof family. It depends on Mg(2+) as a cofactor.

The protein is Putative phosphatase MG265 of Mycoplasma genitalium (strain ATCC 33530 / DSM 19775 / NCTC 10195 / G37) (Mycoplasmoides genitalium).